The following is a 109-amino-acid chain: Cell division suppressor protein YneA (109 aa).

Residues 40–94 form the LysM domain; sequence STVTITKGDTLWELSNKYHNHHHLTTNEFVKWVEDVNDLNSDTAQSLSPGDKLYI.

This sequence belongs to the YneA family.

It is found in the cytoplasm. Its function is as follows. Inhibits cell division during the SOS response. Affects a later stage of the cell division protein assembly, after the assembly of the Z ring, by probably suppressing recruitment of FtsL and/or DivIC to the division machinery. The sequence is that of Cell division suppressor protein YneA from Priestia megaterium (strain DSM 319 / IMG 1521) (Bacillus megaterium).